The sequence spans 195 residues: Imidazole glycerol phosphate synthase subunit HisH (195 aa).

The Glutamine amidotransferase type-1 domain occupies 1-195 (MIAVVDLGIG…LRLLENFRRL (195 aa)). The active-site Nucleophile is Cys72. Residues His177 and Glu179 contribute to the active site.

As to quaternary structure, heterodimer of HisH and HisF.

It is found in the cytoplasm. The enzyme catalyses 5-[(5-phospho-1-deoxy-D-ribulos-1-ylimino)methylamino]-1-(5-phospho-beta-D-ribosyl)imidazole-4-carboxamide + L-glutamine = D-erythro-1-(imidazol-4-yl)glycerol 3-phosphate + 5-amino-1-(5-phospho-beta-D-ribosyl)imidazole-4-carboxamide + L-glutamate + H(+). The catalysed reaction is L-glutamine + H2O = L-glutamate + NH4(+). Its pathway is amino-acid biosynthesis; L-histidine biosynthesis; L-histidine from 5-phospho-alpha-D-ribose 1-diphosphate: step 5/9. IGPS catalyzes the conversion of PRFAR and glutamine to IGP, AICAR and glutamate. The HisH subunit catalyzes the hydrolysis of glutamine to glutamate and ammonia as part of the synthesis of IGP and AICAR. The resulting ammonia molecule is channeled to the active site of HisF. The sequence is that of Imidazole glycerol phosphate synthase subunit HisH from Thermococcus kodakarensis (strain ATCC BAA-918 / JCM 12380 / KOD1) (Pyrococcus kodakaraensis (strain KOD1)).